A 258-amino-acid polypeptide reads, in one-letter code: Hydroxyacylglutathione hydrolase (258 aa).

Positions 52, 54, 56, 57, 109, 126, and 164 each coordinate Zn(2+).

The protein belongs to the metallo-beta-lactamase superfamily. Glyoxalase II family. Monomer. It depends on Zn(2+) as a cofactor.

The catalysed reaction is an S-(2-hydroxyacyl)glutathione + H2O = a 2-hydroxy carboxylate + glutathione + H(+). The protein operates within secondary metabolite metabolism; methylglyoxal degradation; (R)-lactate from methylglyoxal: step 2/2. Thiolesterase that catalyzes the hydrolysis of S-D-lactoyl-glutathione to form glutathione and D-lactic acid. The protein is Hydroxyacylglutathione hydrolase of Xylella fastidiosa (strain M23).